Consider the following 56-residue polypeptide: Large ribosomal subunit protein bL33 (56 aa).

Belongs to the bacterial ribosomal protein bL33 family.

This is Large ribosomal subunit protein bL33 from Actinobacillus pleuropneumoniae serotype 5b (strain L20).